We begin with the raw amino-acid sequence, 141 residues long: Large ribosomal subunit protein uL11 (141 aa).

This sequence belongs to the universal ribosomal protein uL11 family. As to quaternary structure, part of the ribosomal stalk of the 50S ribosomal subunit. Interacts with L10 and the large rRNA to form the base of the stalk. L10 forms an elongated spine to which L12 dimers bind in a sequential fashion forming a multimeric L10(L12)X complex. One or more lysine residues are methylated.

Its function is as follows. Forms part of the ribosomal stalk which helps the ribosome interact with GTP-bound translation factors. In Picosynechococcus sp. (strain ATCC 27264 / PCC 7002 / PR-6) (Agmenellum quadruplicatum), this protein is Large ribosomal subunit protein uL11.